Consider the following 257-residue polypeptide: Spindlin-2C (257 aa).

The disordered stretch occupies residues 1 to 47 (MKTPHKKGAAKEQMGEGVGHHIGSTTIKKKKASQKRQRSRSSSRRSI). The segment covering 27-43 (IKKKKASQKRQRSRSSS) has biased composition (basic residues). 3 tudor-like domain regions span residues 48-97 (VGCR…LELH), 127-176 (IGKA…YQLL), and 208-253 (IGKH…YDLV). 2 histone H3K4me3 and H3R8me2a binding regions span residues E136 and 244-246 (DFH).

It belongs to the SPIN/STSY family. Interacts with C11orf84/SPINDOC.

Its subcellular location is the nucleus. In terms of biological role, may be involved in the regulation of cell cycle progression. Exhibits H3K4me3-binding activity. This Mus musculus (Mouse) protein is Spindlin-2C (Spin2c).